A 99-amino-acid chain; its full sequence is Large ribosomal subunit protein uL23 (99 aa).

This sequence belongs to the universal ribosomal protein uL23 family. Part of the 50S ribosomal subunit. Contacts protein L29, and trigger factor when it is bound to the ribosome.

Functionally, one of the early assembly proteins it binds 23S rRNA. One of the proteins that surrounds the polypeptide exit tunnel on the outside of the ribosome. Forms the main docking site for trigger factor binding to the ribosome. This is Large ribosomal subunit protein uL23 from Alkalilimnicola ehrlichii (strain ATCC BAA-1101 / DSM 17681 / MLHE-1).